A 313-amino-acid chain; its full sequence is Ribosomal RNA small subunit methyltransferase H (313 aa).

S-adenosyl-L-methionine contacts are provided by residues 35-37, D55, F79, D100, and Q107; that span reads GGH.

Belongs to the methyltransferase superfamily. RsmH family.

The protein resides in the cytoplasm. It catalyses the reaction cytidine(1402) in 16S rRNA + S-adenosyl-L-methionine = N(4)-methylcytidine(1402) in 16S rRNA + S-adenosyl-L-homocysteine + H(+). Functionally, specifically methylates the N4 position of cytidine in position 1402 (C1402) of 16S rRNA. This is Ribosomal RNA small subunit methyltransferase H from Burkholderia ambifaria (strain MC40-6).